The primary structure comprises 167 residues: Translationally-controlled tumor protein homolog (167 aa).

Positions 1–167 (MIIYKDIFSN…WKHGIVEEKI (167 aa)) constitute a TCTP domain. A phosphoserine mark is found at S9 and S15.

It belongs to the TCTP family. Interacts with the 40S and 60S ribosomal subunits. Interacts with microtubules.

It is found in the cytoplasm. The protein resides in the cytoskeleton. The protein localises to the mitochondrion. Functionally, involved in protein synthesis. Involved in microtubule stabilization. This chain is Translationally-controlled tumor protein homolog (TMA19), found in Saccharomyces cerevisiae (strain ATCC 204508 / S288c) (Baker's yeast).